The primary structure comprises 252 residues: MILYEYPFNERIRTLLRLEDLFDRLEYFLGQDHAHQHHVALTTLFEIIDVAGRADLKTDLIKELERQRQALAPLRANPQIDQEALDAVIGEIEQGIAMLNQTVGKAGQLLADNEWLTSIRSRAIIPGGTCEFDLPAYYAWQHRPAEDRRADILKWVRPLLSLRMGTTIVLRLLREAGQSGKVIATGGSYQQMLSGRSYQLMQVYLDDSLLAFIPEMSANKYMLWVRFTQQDGDLRPRSVDADIPFLLKLCNF.

This sequence belongs to the ZapD family. Interacts with FtsZ.

The protein resides in the cytoplasm. Functionally, cell division factor that enhances FtsZ-ring assembly. Directly interacts with FtsZ and promotes bundling of FtsZ protofilaments, with a reduction in FtsZ GTPase activity. The protein is Cell division protein ZapD of Cupriavidus necator (strain ATCC 17699 / DSM 428 / KCTC 22496 / NCIMB 10442 / H16 / Stanier 337) (Ralstonia eutropha).